A 219-amino-acid polypeptide reads, in one-letter code: RING finger protein nenya (219 aa).

The segment at 6-48 (CNKCFRRRNVEPTLIFHMTQCQHVLCASCLSESSTDKKCPLCK) adopts an RING-type zinc-finger fold. Residues 161–181 (NQARGLRPRTPSVTTSDNTQS) form a disordered region.

As to quaternary structure, may interact with itself, with narya and vilya through its RING-type zinc finger.

Its function is as follows. Required for the formation of DNA double-strand breaks together with narya and vilya during the meiotic recombination process. Plays a redundant role with narya in chromosome segregation during female meiosis. This is RING finger protein nenya from Drosophila melanogaster (Fruit fly).